Here is a 357-residue protein sequence, read N- to C-terminus: Trans-resveratrol di-O-methyltransferase (357 aa).

Residues G200, D223, D243, M244, and K257 each contribute to the S-adenosyl-L-methionine site. H261 serves as the catalytic Proton acceptor.

The protein belongs to the class I-like SAM-binding methyltransferase superfamily. Cation-independent O-methyltransferase family. COMT subfamily.

It catalyses the reaction trans-resveratrol + 2 S-adenosyl-L-methionine = pterostilbene + 2 S-adenosyl-L-homocysteine + 2 H(+). Catalyzes the biosynthesis of pterostilbene from resveratrol. Pterostilbene has both antifungal and pharmacological properties. Also has activity toward resveratrol monomethyl ether (RME). The protein is Trans-resveratrol di-O-methyltransferase (ROMT) of Vitis vinifera (Grape).